A 244-amino-acid chain; its full sequence is tRNA pseudouridine synthase A (244 aa).

Asp-52 (nucleophile) is an active-site residue. A substrate-binding site is contributed by Tyr-110.

Belongs to the tRNA pseudouridine synthase TruA family. In terms of assembly, homodimer.

The enzyme catalyses uridine(38/39/40) in tRNA = pseudouridine(38/39/40) in tRNA. Its function is as follows. Formation of pseudouridine at positions 38, 39 and 40 in the anticodon stem and loop of transfer RNAs. The sequence is that of tRNA pseudouridine synthase A from Caldicellulosiruptor bescii (strain ATCC BAA-1888 / DSM 6725 / KCTC 15123 / Z-1320) (Anaerocellum thermophilum).